Here is a 104-residue protein sequence, read N- to C-terminus: Nucleoid-associated protein Moth_0028 (104 aa).

The protein belongs to the YbaB/EbfC family. Homodimer.

It is found in the cytoplasm. It localises to the nucleoid. Functionally, binds to DNA and alters its conformation. May be involved in regulation of gene expression, nucleoid organization and DNA protection. The polypeptide is Nucleoid-associated protein Moth_0028 (Moorella thermoacetica (strain ATCC 39073 / JCM 9320)).